The following is a 239-amino-acid chain: Small ribosomal subunit protein uS3 (239 aa).

A KH type-2 domain is found at 39–107; it reads VRQVLRKKMS…SVHINVIEVR (69 aa). A disordered region spans residues 214 to 239; sequence GQEKQDDGSRGDRNADRSSRRSREVR. Over residues 216 to 239 the composition is skewed to basic and acidic residues; it reads EKQDDGSRGDRNADRSSRRSREVR.

Belongs to the universal ribosomal protein uS3 family. Part of the 30S ribosomal subunit. Forms a tight complex with proteins S10 and S14.

Its function is as follows. Binds the lower part of the 30S subunit head. Binds mRNA in the 70S ribosome, positioning it for translation. The protein is Small ribosomal subunit protein uS3 of Xylella fastidiosa (strain M12).